The primary structure comprises 879 residues: DNA double-strand break repair Rad50 ATPase (879 aa).

ATP-binding positions include 32–38 (NGAGKSS) and Gln-139. Coiled coils occupy residues 184 to 304 (IELQ…NKIK) and 342 to 436 (EIKG…NQVK). The region spanning 394–492 (LQKLNEDLNN…LISELNQIIN (99 aa)) is the Zinc-hook domain. Residues Cys-440 and Cys-443 each coordinate Zn(2+). Positions 502–722 (IRNLADYNNL…LITAYDKLKK (221 aa)) form a coiled coil. 786-791 (LLSGGE) lines the ATP pocket.

The protein belongs to the SMC family. RAD50 subfamily. As to quaternary structure, homodimer. Forms a heterotetramer composed of two Mre11 subunits and two Rad50 subunits. Requires Zn(2+) as cofactor.

In terms of biological role, part of the Rad50/Mre11 complex, which is involved in the early steps of DNA double-strand break (DSB) repair. The complex may facilitate opening of the processed DNA ends to aid in the recruitment of HerA and NurA. Rad50 controls the balance between DNA end bridging and DNA resection via ATP-dependent structural rearrangements of the Rad50/Mre11 complex. This Sulfurisphaera tokodaii (strain DSM 16993 / JCM 10545 / NBRC 100140 / 7) (Sulfolobus tokodaii) protein is DNA double-strand break repair Rad50 ATPase.